A 599-amino-acid chain; its full sequence is Omega-hydroxyceramide transacylase (599 aa).

One can recognise a PNPLA domain in the interval 16–185; that stretch reads ISFSGSGFLS…TSMQPCSFWT (170 aa). Residues 51-55 carry the GXSXG motif; that stretch reads GTSAG. Ser53 (nucleophile) is an active-site residue. Catalysis depends on Asp172, which acts as the Proton acceptor. The DGA/G motif lies at 172 to 174; sequence DGG. The disordered stretch occupies residues 289 to 563; it reads PPPPSLQNLP…PASKLKSAPC (275 aa). 2 stretches are compositionally biased toward polar residues: residues 325 to 335 and 350 to 362; these read SSAAPSVQTPE and VSIS…SPLS. Over residues 443-454 the composition is skewed to low complexity; it reads SPESPRLLLRSS. Residues 468-478 show a composition bias toward pro residues; the sequence is PLSPSTPPAGP. Residues 490-501 show a composition bias toward polar residues; that stretch reads ATGSPALSQLTG. Low complexity predominate over residues 551–563; that stretch reads SKKPASKLKSAPC.

Specifically expressed in skin by keratinocytes, at the boundary area between the nucleated stratum granulosum and the denucleated stratum corneum in the epidermis (at protein level). Also expressed in stomach and other surface lining tissues like intestine and tongue. Also detected in testis as well as in other tissues but at very low level.

Its subcellular location is the cytoplasm. The catalysed reaction is an N-(omega-hydroxy-ultra-long chain fatty acyl)-sphingoid base + a (9Z,12Z)-octadecadienoyl-containing triacyl-sn-glycerol = an N-[omega-(9Z,12Z-octadecadienoyloxy)-O-ultra-long chain fatty acyl]-sphingoid base + a diacylglycerol. It carries out the reaction an N-(omega-hydroxy-ultra-long chain fatty acyl)-sphing-4-enine + a (9Z,12Z)-octadecadienoyl-containing triacyl-sn-glycerol = an N-(omega-(9Z,12Z-octadecadienoyloxy)-ultra-long chain fatty acyl)-sphing-4-enine + a diacylglycerol. The enzyme catalyses N-(28-hydroxyoctacosanoyl)-sphing-4-enine + a (9Z,12Z)-octadecadienoyl-containing triacyl-sn-glycerol = N-(28-(9Z,12Z-octadecadienoyloxy)-octacosanoyl)-sphing-4-enine + a diacylglycerol. It catalyses the reaction N-(30-hydroxytriacontanoyl)-sphing-4-enine + 1,2,3-tri-(9Z,12Z)-octadecadienoylglycerol = N-[30-(9Z,12Z-octadecadienoyloxy)-triacontanoyl]-sphing-4-enine + di-(9Z,12Z)-octadecadienoylglycerol. The catalysed reaction is N-(32-hydroxydotriacontanoyl)-sphing-4-enine + a (9Z,12Z)-octadecadienoyl-containing triacyl-sn-glycerol = N-(32-(9Z,12Z-octadecadienoyloxy)-dotricontanoyl)-sphing-4-enine + a diacylglycerol. It carries out the reaction N-(32-hydroxydotriacontenoyl)-sphing-4-enine + a (9Z,12Z)-octadecadienoyl-containing triacyl-sn-glycerol = an N-(32-(9Z,12Z-octadecadienoyloxy)-dotriacontenoyl)-sphing-4-enine + a diacylglycerol. The enzyme catalyses an N-(34-hydroxytetratriacontenoyl)-sphing-4-enine + a (9Z,12Z)-octadecadienoyl-containing triacyl-sn-glycerol = an N-(34-(9Z,12Z-octadecadienoyloxy)-tetratriacontenoyl)-sphing-4-enine + a diacylglycerol. It catalyses the reaction an N-(34-hydroxytetratriacontadienoyl)-sphing-4-enine + a (9Z,12Z)-octadecadienoyl-containing triacyl-sn-glycerol = an N-(34-(9Z,12Z-octadecadienoyloxy)-tetratriacontadienoyl)-sphing-4-enine + a diacylglycerol. The catalysed reaction is an N-(36-hydroxyhexatriacontenoyl)-sphing-4-enine + a (9Z,12Z)-octadecadienoyl-containing triacyl-sn-glycerol = an N-(36-(9Z,12Z-octadecadienoyloxy)-hexatriacontenoyl)-sphing-4-enine + a diacylglycerol. It carries out the reaction an N-(36-hydroxyhexatriacontadienoyl)-sphing-4-enine + a (9Z,12Z)-octadecadienoyl-containing triacyl-sn-glycerol = an N-(36-(9Z,12Z-octadecadienoyloxy)-hexatriacontadienoyl)-sphing-4-enine + a diacylglycerol. The enzyme catalyses an N-(38-hydroxyoctatriacontenoyl)-sphing-4-enine + a (9Z,12Z)-octadecadienoyl-containing triacyl-sn-glycerol = an N-(38-(9Z,12Z-octadecadienoyloxy)-octatriacontenoyl)-sphing-4-enine + a diacylglycerol. Its function is as follows. Omega-hydroxyceramide transacylase involved in the synthesis of omega-O-acylceramides (esterified omega-hydroxyacyl-sphingosine; EOS), which are extremely hydrophobic lipids involved in skin barrier formation. Catalyzes the last step of the synthesis of omega-O-acylceramides by transferring linoleic acid from triglycerides to an omega-hydroxyceramide. Omega-O-acylceramides, are required for the biogenesis of lipid lamellae in the stratum corneum and the formation of the cornified lipid envelope which are essential for the epidermis barrier function. These lipids also play a role in keratinocyte differentiation. May also act on omega-hydroxylated ultra-long chain fatty acids (omega-OH ULCFA) and acylglucosylceramides (GlcEOS). The sequence is that of Omega-hydroxyceramide transacylase from Mus musculus (Mouse).